Here is a 759-residue protein sequence, read N- to C-terminus: Tripartite motif-containing protein 46 (759 aa).

Residues 1 to 166 (MAEGEDMQTF…VERYRQSVSV (166 aa)) are required for proximal axon localization, axon formation and migration. The RING-type 1; degenerate zinc-finger motif lies at 33–59 (CPVCQEMYKQPLVLPCTHNVCQACARE). Positions 67 to 98 (IGHGGDPSSEPTSPASTPSTRSPRLSRRTLPK) are disordered. The segment covering 73–89 (PSSEPTSPASTPSTRSP) has biased composition (low complexity). The RING-type 2; degenerate zinc-finger motif lies at 172-231 (CQLCKPPPLEATKGCSECRATFCNECFKLFHPWGTQKAQHEPTLPTLSFRPKGLMCPDHK). The B box-type zinc finger occupies 222-263 (PKGLMCPDHKEEVTHYCKTCQRLVCQLCRVRRTHSGHKITPV). 4 residues coordinate Zn(2+): Cys227, His230, Cys249, and His255. The stretch at 294-400 (ELEETIRHTE…RATEALQTFR (107 aa)) forms a coiled coil. Phosphoserine is present on Ser330. The 58-residue stretch at 370-427 (LKETDQPCFVQAAKQLHNRIARATEALQTFRPAASSSFRHCQLDVGREMKLLTELNFL) folds into the COS domain. A required for microtubule association, proximal axon localization and axon formation region spans residues 411-429 (QLDVGREMKLLTELNFLRV). One can recognise a Fibronectin type-III domain in the interval 429–528 (VPEAPVIDTQ…EDVHLHTPPA (100 aa)). In terms of domain architecture, B30.2/SPRY spans 513–747 (GYGEYSEDVH…LQEPVGTKPE (235 aa)). Ser627 carries the phosphoserine modification.

Belongs to the TRIM/RBCC family. Interacts with TUBB3 and TUBA4A. As to expression, expressed in primary hippocampal and cortical neurons.

The protein resides in the cell projection. It localises to the axon. Its subcellular location is the cytoplasm. It is found in the cytoskeleton. Microtubule-associated protein that is involved in the formation of parallel microtubule bundles linked by cross-bridges in the proximal axon. Required for the uniform orientation and maintenance of the parallel microtubule fascicles, which are important for efficient cargo delivery and trafficking in axons. Thereby also required for proper axon specification, the establishment of neuronal polarity and proper neuronal migration. This chain is Tripartite motif-containing protein 46, found in Rattus norvegicus (Rat).